The sequence spans 340 residues: HTH-type transcriptional regulator GalS (340 aa).

The HTH lacI-type domain occupies Met1 to Thr56. Residues Ile4 to Asn23 constitute a DNA-binding region (H-T-H motif).

In terms of assembly, homodimer.

Repressor of the mgl operon. Binds galactose and D-fucose as inducers. GalS binds to an operator DNA sequence within its own coding sequence. In Salmonella typhimurium (strain LT2 / SGSC1412 / ATCC 700720), this protein is HTH-type transcriptional regulator GalS (galS).